The primary structure comprises 495 residues: Probable aspartic-type endopeptidase OPSB (495 aa).

The first 19 residues, 1 to 19, serve as a signal peptide directing secretion; it reads MRGDSFIWSLATAIPLLST. The region spanning 73-408 is the Peptidase A1 domain; that stretch reads YFCNLTLGTP…DLDNNEISIA (336 aa). A glycan (N-linked (GlcNAc...) asparagine) is linked at Asn76. Residue Asp91 is part of the active site. Asn136 is a glycosylation site (N-linked (GlcNAc...) asparagine). Asp290 is a catalytic residue. Asn413 carries N-linked (GlcNAc...) asparagine glycosylation. The interval 447–470 is disordered; sequence ATGLPGVETGVPGSRPPSSKAAGQ. Ala467 is lipidated: GPI-anchor amidated alanine. The propeptide at 468 to 495 is removed in mature form; it reads AGQAKRPDFVLGVAAVGLAGAGMLFAAM.

Belongs to the peptidase A1 family.

The protein resides in the cell membrane. Functionally, probable GPI-anchored aspartic-type endopeptidase which contributes to virulence. This is Probable aspartic-type endopeptidase OPSB (OPSB) from Arthroderma benhamiae (strain ATCC MYA-4681 / CBS 112371) (Trichophyton mentagrophytes).